The following is a 497-amino-acid chain: Cobyrinate a,c-diamide synthase (497 aa).

The 206-residue stretch at 273-478 (RIGIALDEAF…AHLHGVAYRE (206 aa)) folds into the GATase cobBQ-type domain. Cys355 functions as the Nucleophile in the catalytic mechanism.

The protein belongs to the CobB/CbiA family. Mg(2+) serves as cofactor.

The enzyme catalyses cob(II)yrinate + 2 L-glutamine + 2 ATP + 2 H2O = cob(II)yrinate a,c diamide + 2 L-glutamate + 2 ADP + 2 phosphate + 2 H(+). The catalysed reaction is Ni-sirohydrochlorin + 2 L-glutamine + 2 ATP + 2 H2O = Ni-sirohydrochlorin a,c-diamide + 2 L-glutamate + 2 ADP + 2 phosphate + 2 H(+). The protein operates within cofactor biosynthesis; adenosylcobalamin biosynthesis; cob(II)yrinate a,c-diamide from sirohydrochlorin (anaerobic route): step 10/10. In terms of biological role, catalyzes the ATP-dependent amidation of the two carboxylate groups at positions a and c of cobyrinate, using either L-glutamine or ammonia as the nitrogen source (Potential). Involved in the biosynthesis of the unique nickel-containing tetrapyrrole coenzyme F430, the prosthetic group of methyl-coenzyme M reductase (MCR), which plays a key role in methanogenesis and anaerobic methane oxidation. Catalyzes the ATP-dependent amidation of the two carboxylate groups at positions a and c of Ni-sirohydrochlorin, using L-glutamine or ammonia as the nitrogen source. In Methanosarcina acetivorans (strain ATCC 35395 / DSM 2834 / JCM 12185 / C2A), this protein is Cobyrinate a,c-diamide synthase.